The sequence spans 282 residues: Bis(5'-nucleosyl)-tetraphosphatase, symmetrical (282 aa).

It belongs to the Ap4A hydrolase family.

It catalyses the reaction P(1),P(4)-bis(5'-adenosyl) tetraphosphate + H2O = 2 ADP + 2 H(+). Hydrolyzes diadenosine 5',5'''-P1,P4-tetraphosphate to yield ADP. This is Bis(5'-nucleosyl)-tetraphosphatase, symmetrical from Enterobacter sp. (strain 638).